A 140-amino-acid chain; its full sequence is Small ribosomal subunit protein eS12 (140 aa).

Belongs to the eukaryotic ribosomal protein eS12 family. Part of the small subunit (SSU) processome, composed of more than 70 proteins and the RNA chaperone small nucleolar RNA (snoRNA) U3. Subunit of the 40S ribosomal complex.

Its subcellular location is the nucleus. The protein resides in the nucleolus. Its function is as follows. Part of the small subunit (SSU) processome, first precursor of the small eukaryotic ribosomal subunit. During the assembly of the SSU processome in the nucleolus, many ribosome biogenesis factors, an RNA chaperone and ribosomal proteins associate with the nascent pre-rRNA and work in concert to generate RNA folding, modifications, rearrangements and cleavage as well as targeted degradation of pre-ribosomal RNA by the RNA exosome. Subunit of the 40S ribosomal complex. Involved in cold-warm shock-induced translocation of the RNA exosome components from the nucleolus to nucleoplasm. The polypeptide is Small ribosomal subunit protein eS12 (rps-12) (Caenorhabditis elegans).